The chain runs to 413 residues: Histidine--tRNA ligase (413 aa).

Belongs to the class-II aminoacyl-tRNA synthetase family.

The protein resides in the cytoplasm. The catalysed reaction is tRNA(His) + L-histidine + ATP = L-histidyl-tRNA(His) + AMP + diphosphate + H(+). In Methanosarcina acetivorans (strain ATCC 35395 / DSM 2834 / JCM 12185 / C2A), this protein is Histidine--tRNA ligase.